The sequence spans 175 residues: Adenine phosphoribosyltransferase (175 aa).

This sequence belongs to the purine/pyrimidine phosphoribosyltransferase family. As to quaternary structure, homodimer.

The protein resides in the cytoplasm. The catalysed reaction is AMP + diphosphate = 5-phospho-alpha-D-ribose 1-diphosphate + adenine. Its pathway is purine metabolism; AMP biosynthesis via salvage pathway; AMP from adenine: step 1/1. Functionally, catalyzes a salvage reaction resulting in the formation of AMP, that is energically less costly than de novo synthesis. This is Adenine phosphoribosyltransferase from Francisella tularensis subsp. tularensis (strain WY96-3418).